We begin with the raw amino-acid sequence, 509 residues long: Dihydrolipoyl dehydrogenase, mitochondrial (509 aa).

The transit peptide at 1-35 directs the protein to the mitochondrion; sequence MQSWSRVYCSLAKRGHFSRISHGLQAVSAVPLRTY. Lys66 carries the post-translational modification N6-acetyllysine; alternate. Lys66 is subject to N6-succinyllysine; alternate. FAD contacts are provided by residues 71–80 and Lys89; that span reads EKNETLGGTC. Cysteines 80 and 85 form a disulfide. N6-acetyllysine; alternate is present on residues Lys104, Lys122, Lys132, and Lys143. N6-succinyllysine; alternate is present on residues Lys104, Lys122, Lys132, and Lys143. Gly154 is an FAD binding site. N6-succinyllysine occurs at positions 159 and 166. 183 to 185 is a binding site for FAD; that stretch reads TGS. NAD(+) contacts are provided by residues 220–227 and Glu243; that span reads GAGVIGVE. 2 positions are modified to N6-succinyllysine: Lys273 and Lys277. Val278 serves as a coordination point for NAD(+). Phosphoserine occurs at positions 285 and 297. Residue Gly314 coordinates NAD(+). Lys346 carries the post-translational modification N6-acetyllysine. FAD is bound by residues Asp355 and 361–364; that span reads MLAH. Lys410 bears the N6-acetyllysine; alternate mark. Position 410 is an N6-succinyllysine; alternate (Lys410). Lys417 and Lys420 each carry N6-acetyllysine. Lys430 is subject to N6-succinyllysine. His487 serves as the catalytic Proton acceptor. At Ser502 the chain carries Phosphoserine. Lys505 carries the N6-acetyllysine; alternate modification. Residue Lys505 is modified to N6-succinyllysine; alternate.

It belongs to the class-I pyridine nucleotide-disulfide oxidoreductase family. As to quaternary structure, homodimer. Part of the multimeric pyruvate dehydrogenase complex that contains multiple copies of pyruvate dehydrogenase (subunits PDHA (PDHA1 or PDHA2) and PDHB, E1), dihydrolipoamide acetyltransferase (DLAT, E2) and lipoamide dehydrogenase (DLD, E3). These subunits are bound to an inner core composed of about 48 DLAT and 12 PDHX molecules (by non covalent bonds). The 2-oxoglutarate dehydrogenase complex is composed of OGDH (2-oxoglutarate dehydrogenase; E1), DLST (dihydrolipoamide succinyltransferase; E2), DLD (dihydrolipoamide dehydrogenase; E3) and the assembly factor KGD4. It contains multiple copies of the three enzymatic components (E1, E2 and E3). In the nucleus, the 2-oxoglutarate dehydrogenase complex associates with KAT2A. Interacts with PDHX. The cofactor is FAD. In terms of processing, tyrosine phosphorylated.

Its subcellular location is the mitochondrion matrix. It is found in the nucleus. The protein localises to the cell projection. The protein resides in the cilium. It localises to the flagellum. Its subcellular location is the cytoplasmic vesicle. It is found in the secretory vesicle. The protein localises to the acrosome. The catalysed reaction is N(6)-[(R)-dihydrolipoyl]-L-lysyl-[protein] + NAD(+) = N(6)-[(R)-lipoyl]-L-lysyl-[protein] + NADH + H(+). Functionally, lipoamide dehydrogenase is a component of the glycine cleavage system as well as an E3 component of three alpha-ketoacid dehydrogenase complexes (pyruvate-, alpha-ketoglutarate-, and branched-chain amino acid-dehydrogenase complex). The 2-oxoglutarate dehydrogenase complex is mainly active in the mitochondrion. A fraction of the 2-oxoglutarate dehydrogenase complex also localizes in the nucleus and is required for lysine succinylation of histones: associates with KAT2A on chromatin and provides succinyl-CoA to histone succinyltransferase KAT2A. In monomeric form may have additional moonlighting function as serine protease. Involved in the hyperactivation of spermatazoa during capacitation and in the spermatazoal acrosome reaction. The sequence is that of Dihydrolipoyl dehydrogenase, mitochondrial (DLD) from Canis lupus familiaris (Dog).